Reading from the N-terminus, the 400-residue chain is SEC14-like protein 3 (400 aa).

Positions 76 to 249 (PPEVIQKYMP…HFGGTLTDPD (174 aa)) constitute a CRAL-TRIO domain. Position 223 is a phosphoserine (Ser223). Residues 275 to 383 (KTQYEHSVQI…AKKVSFTVEV (109 aa)) form the GOLD domain.

Post-translationally, the N-terminus seems to be blocked. Detected in a layer of supportive cells in olfactory epithelium, in the apical region of the trachea and in the surface layer of ciliated bronchial epithelium in the lung.

In terms of biological role, probable hydrophobic ligand-binding protein; may play a role in the transport of hydrophobic ligands like tocopherol, squalene and phospholipids. The polypeptide is SEC14-like protein 3 (Sec14l3) (Rattus norvegicus (Rat)).